The primary structure comprises 254 residues: MWNPEAYLSFADHRGRPFFDLLARVGADAPRRVVDLGCGPGNLTVVLRHRWPEAVVEAWDNSPEMVAAARERGVQANLGDVRGWSPQPDTDVVLSNATLQWVPEHPELLTRWAGALAAGSWLAMQVPGNFDAPSHQAVRRLADREPWAPLLHDIPFRVGKVVETPADYAALLTDAGCSVDAWETTYIHELTDAHPVLEWITGTALRPVRSRLTDEQWDRFRAELIPLLDEAYPVRADGRTFFPFRRVFVVARTG.

This sequence belongs to the methyltransferase superfamily. Tam family.

It is found in the cytoplasm. It carries out the reaction trans-aconitate + S-adenosyl-L-methionine = (E)-3-(methoxycarbonyl)pent-2-enedioate + S-adenosyl-L-homocysteine. Functionally, catalyzes the S-adenosylmethionine monomethyl esterification of trans-aconitate. The polypeptide is Trans-aconitate 2-methyltransferase (Mycobacterium sp. (strain JLS)).